A 396-amino-acid polypeptide reads, in one-letter code: Diels-Alderase mpsD (396 aa).

This sequence belongs to the Diels-Alderase family.

Its pathway is secondary metabolite biosynthesis. In terms of biological role, diels-Alderase; part of the gene cluster that mediates the biosynthesis of macrophasetins, 3-decalinoyltetramic acids (DTAs) which feature a tetramate (pyrrolidine-2,4-dione) unit connected to a decalin fragment and that have potent bioactivities. The PKS-NRPS mpsA together with its associated enoylreductase partner mpsG incorporate one unit of acetyl-CoA, seven units of malonyl-CoA, and one unit of L-alanine to assemble the linear tetramic acid intermediate corresponding to the backbone of macrophasetins. Without the Diels-Alderase mpsD, the mpsA/G product can undergo the non-enzymatic intramolecular Diels-Alder (IMDA) reaction to generate both macrophasetin A and macrophasetin B. Catalyzed by mpsD, the linear tetramic acid intermediate is thoroughly converted to macrophasetin A via the endo-IMDA reaction in a regioselective and stereoselective manner. Finally, the cytochrome P450 monooxygenase mpsF catalyzes the hydroxylation at C20 to yield the end product macrophasetin C. In Macrophomina phaseolina (strain MS6) (Charcoal rot fungus), this protein is Diels-Alderase mpsD.